The chain runs to 604 residues: Tyrosine-protein kinase transforming protein erbB (604 aa).

The region spanning F132–L399 is the Protein kinase domain. Residues L138–I146 and K165 each bind ATP. D257 functions as the Proton acceptor in the catalytic mechanism.

It belongs to the protein kinase superfamily. Tyr protein kinase family. EGF receptor subfamily.

The catalysed reaction is L-tyrosyl-[protein] + ATP = O-phospho-L-tyrosyl-[protein] + ADP + H(+). In terms of biological role, the v-erbB oncogene transforms avian fibroblasts and erythroblasts in culture and induces sarcomas and erythroleukemias in chickens. It is a truncated and mutated version of the receptor for epidermal growth factor. The sequence is that of Tyrosine-protein kinase transforming protein erbB (V-ERBB) from Galliformes.